The following is a 479-amino-acid chain: MNFETIIGLEVHVELNTNSKIFSPSSAHFGEDPNANTNVIDWSFPGVLPVMNKGVIDAGIQAALALNMDIHKEMHFDRKNYFYPDNPKAYQISQFDEPIGYNGWIDIKLEDGSTKKIRIERAHLEEDAGKNTHGTDGYSYVDLNRQGVPLIEIVSEADMRSPEEAYAYLTALKEIIQYTGISDVKMEEGSMRVDANISLRPYGQEQFGTKTELKNLNSFSNVRKGLEFEVERQAKLLRSGGVIRQETRRYDEANKGTILMRVKEGAADYRYFPEPDLPLYEIDDAWIDEMRAQLPQFPAQRRAKYEEELGLSAYDASQLTATKALSDFFETAVSLGGDAKQVSNWLQGEVAQFLNAEGKTIEEIRLTPDNLVEMIAIIADGTISSKMAKKVFVHLAKNGGSARAYVEKAGLVQISDPAVLVPIIHQVFADNEAAVADFKSGKRNADKAFTGFLMKATKGQANPQVAQQLLAQELQKLRD.

The protein belongs to the GatB/GatE family. GatB subfamily. Heterotrimer of A, B and C subunits.

It carries out the reaction L-glutamyl-tRNA(Gln) + L-glutamine + ATP + H2O = L-glutaminyl-tRNA(Gln) + L-glutamate + ADP + phosphate + H(+). The enzyme catalyses L-aspartyl-tRNA(Asn) + L-glutamine + ATP + H2O = L-asparaginyl-tRNA(Asn) + L-glutamate + ADP + phosphate + 2 H(+). Functionally, allows the formation of correctly charged Asn-tRNA(Asn) or Gln-tRNA(Gln) through the transamidation of misacylated Asp-tRNA(Asn) or Glu-tRNA(Gln) in organisms which lack either or both of asparaginyl-tRNA or glutaminyl-tRNA synthetases. The reaction takes place in the presence of glutamine and ATP through an activated phospho-Asp-tRNA(Asn) or phospho-Glu-tRNA(Gln). This chain is Aspartyl/glutamyl-tRNA(Asn/Gln) amidotransferase subunit B, found in Streptococcus pyogenes serotype M4 (strain MGAS10750).